The following is a 158-amino-acid chain: Phosphopantetheine adenylyltransferase (158 aa).

The protein belongs to the eukaryotic CoaD family.

The protein localises to the cytoplasm. It carries out the reaction (R)-4'-phosphopantetheine + ATP + H(+) = 3'-dephospho-CoA + diphosphate. It participates in cofactor biosynthesis; coenzyme A biosynthesis. Functionally, reversibly transfers an adenylyl group from ATP to 4'-phosphopantetheine, yielding dephospho-CoA (dPCoA) and pyrophosphate. The polypeptide is Phosphopantetheine adenylyltransferase (Pyrococcus horikoshii (strain ATCC 700860 / DSM 12428 / JCM 9974 / NBRC 100139 / OT-3)).